A 282-amino-acid polypeptide reads, in one-letter code: High mobility group nucleosome-binding domain-containing protein 5 (282 aa).

The tract at residues 1 to 282 (MPKRKAAGQG…GKKEEPQSIV (282 aa)) is disordered. At T31 the chain carries Phosphothreonine. Positions 37 to 46 (KRTSSSRKMK) are enriched in basic residues. K67 is covalently cross-linked (Glycyl lysine isopeptide (Lys-Gly) (interchain with G-Cter in SUMO2)). Y76 is modified (phosphotyrosine). A compositionally biased stretch (basic and acidic residues) spans 81 to 119 (KNGEAKITEAPASEKEIVEVKEENIEDATEKGGEKKEAV). S93 carries the phosphoserine modification. Residue K101 forms a Glycyl lysine isopeptide (Lys-Gly) (interchain with G-Cter in SUMO1); alternate linkage. Residue K101 forms a Glycyl lysine isopeptide (Lys-Gly) (interchain with G-Cter in SUMO2); alternate linkage. K124 participates in a covalent cross-link: Glycyl lysine isopeptide (Lys-Gly) (interchain with G-Cter in SUMO2). Over residues 125-138 (NEEEDQKEDEEDQN) the composition is skewed to acidic residues. 2 stretches are compositionally biased toward basic and acidic residues: residues 139–152 (EEKGEAGKEDKDEK) and 158–256 (KEDK…KEDL). A compositionally biased stretch (acidic residues) spans 257 to 270 (KEEEEGKEEDEIKE). Residues 271–282 (DDGKKEEPQSIV) show a composition bias toward basic and acidic residues.

The protein belongs to the HMGN family. In terms of tissue distribution, ubiquitously expressed.

The protein localises to the nucleus. Preferentially binds to euchromatin and modulates cellular transcription by counteracting linker histone-mediated chromatin compaction. In Homo sapiens (Human), this protein is High mobility group nucleosome-binding domain-containing protein 5 (HMGN5).